Reading from the N-terminus, the 252-residue chain is Ribosomal RNA small subunit methyltransferase J (252 aa).

S-adenosyl-L-methionine-binding positions include 101 to 102 (RD), 117 to 118 (ER), 153 to 154 (SS), and Asp-171.

This sequence belongs to the methyltransferase superfamily. RsmJ family.

It is found in the cytoplasm. It carries out the reaction guanosine(1516) in 16S rRNA + S-adenosyl-L-methionine = N(2)-methylguanosine(1516) in 16S rRNA + S-adenosyl-L-homocysteine + H(+). In terms of biological role, specifically methylates the guanosine in position 1516 of 16S rRNA. This Salmonella heidelberg (strain SL476) protein is Ribosomal RNA small subunit methyltransferase J.